We begin with the raw amino-acid sequence, 778 residues long: uncharacterized protein (778 aa).

3 stretches are compositionally biased toward polar residues: residues 1 to 11 (MPISSPGTRCS), 18 to 34 (TLQQ…QSLG), and 41 to 51 (GSITENYVQDS). The interval 1-60 (MPISSPGTRCSSDLKDPTLQQYSAESVSTEQSLGTFEESKGSITENYVQDSSVDEHDDGN) is disordered. The next 2 helical transmembrane spans lie at 356–381 (YILM…APII) and 401–423 (GFLA…GAHI).

It belongs to the TMCO4 family.

The protein resides in the golgi apparatus membrane. This is an uncharacterized protein from Schizosaccharomyces pombe (strain 972 / ATCC 24843) (Fission yeast).